The following is a 1251-amino-acid chain: Probable transcription factor TDA9 (1251 aa).

C2H2-type zinc fingers lie at residues 61–83 (FLCHICTRGFVRQEHLKRHQRAH) and 89–112 (FLCVFCGRCFARRDLVLRHQHKLH). Disordered stretches follow at residues 160–227 (VQLK…KSKR) and 398–428 (NHSHPDSRHNNSSSGINYSNNKNNNESIEKS). Residues 164-173 (KAAKEKKNGK) are compositionally biased toward basic residues. A compositionally biased stretch (polar residues) spans 183–202 (YGANNHSTDVSPSVGNSSTP). The span at 407 to 428 (NNSSSGINYSNNKNNNESIEKS) shows a compositional bias: low complexity. A phosphoserine mark is found at S527 and S603. The span at 617 to 634 (SLTPSLTTQTATTQSGPG) shows a compositional bias: low complexity. Positions 617 to 636 (SLTPSLTTQTATTQSGPGWT) are disordered.

This sequence belongs to the RSF2/TDA9 family.

Its subcellular location is the nucleus. DNA-binding protein that acts probably as a transcription factor. This chain is Probable transcription factor TDA9 (TDA9), found in Saccharomyces cerevisiae (strain ATCC 204508 / S288c) (Baker's yeast).